We begin with the raw amino-acid sequence, 203 residues long: Pyrrolidone-carboxylate peptidase 1 (203 aa).

Residues Glu-78, Cys-141, and His-165 contribute to the active site.

The protein belongs to the peptidase C15 family. In terms of assembly, homotetramer.

Its subcellular location is the cytoplasm. It carries out the reaction Release of an N-terminal pyroglutamyl group from a polypeptide, the second amino acid generally not being Pro.. Functionally, removes 5-oxoproline from various penultimate amino acid residues except L-proline. The sequence is that of Pyrrolidone-carboxylate peptidase 1 from Caldanaerobacter subterraneus subsp. tengcongensis (strain DSM 15242 / JCM 11007 / NBRC 100824 / MB4) (Thermoanaerobacter tengcongensis).